Reading from the N-terminus, the 207-residue chain is Uracil phosphoribosyltransferase (207 aa).

5-phospho-alpha-D-ribose 1-diphosphate contacts are provided by residues Arg77, Arg102, and 129–137 (DPMLATGGS). Uracil contacts are provided by residues Ile192 and 197–199 (GDA). Asp198 lines the 5-phospho-alpha-D-ribose 1-diphosphate pocket.

Belongs to the UPRTase family. Mg(2+) serves as cofactor.

The enzyme catalyses UMP + diphosphate = 5-phospho-alpha-D-ribose 1-diphosphate + uracil. The protein operates within pyrimidine metabolism; UMP biosynthesis via salvage pathway; UMP from uracil: step 1/1. Allosterically activated by GTP. Catalyzes the conversion of uracil and 5-phospho-alpha-D-ribose 1-diphosphate (PRPP) to UMP and diphosphate. This chain is Uracil phosphoribosyltransferase, found in Mycoplasma capricolum subsp. capricolum (strain California kid / ATCC 27343 / NCTC 10154).